We begin with the raw amino-acid sequence, 123 residues long: UPF0102 protein Pcar_2217 (123 aa).

It belongs to the UPF0102 family.

The polypeptide is UPF0102 protein Pcar_2217 (Syntrophotalea carbinolica (strain DSM 2380 / NBRC 103641 / GraBd1) (Pelobacter carbinolicus)).